A 281-amino-acid polypeptide reads, in one-letter code: Probable catechol O-methyltransferase 2 (281 aa).

Residues Ile-78, Glu-100, Ser-108, Glu-127, Val-128, Ala-156, and Asp-183 each contribute to the S-adenosyl-L-methionine site. Asp-183 contributes to the Mg(2+) binding site. Lys-186 is a binding site for substrate. Mg(2+) is bound by residues Asp-211 and Asn-212. Asn-212 contacts substrate.

The protein belongs to the class I-like SAM-binding methyltransferase superfamily. Cation-dependent O-methyltransferase family. Mg(2+) serves as cofactor.

It is found in the vacuole. It catalyses the reaction a catechol + S-adenosyl-L-methionine = a guaiacol + S-adenosyl-L-homocysteine + H(+). The chain is Probable catechol O-methyltransferase 2 from Schizosaccharomyces pombe (strain 972 / ATCC 24843) (Fission yeast).